The following is a 256-amino-acid chain: Triosephosphate isomerase (256 aa).

9–11 (NWK) serves as a coordination point for substrate. The active-site Electrophile is the H96. Residue E168 is the Proton acceptor of the active site. Substrate-binding positions include S213 and 234 to 235 (GG).

Belongs to the triosephosphate isomerase family. Homodimer.

Its subcellular location is the cytoplasm. The catalysed reaction is D-glyceraldehyde 3-phosphate = dihydroxyacetone phosphate. Its pathway is carbohydrate biosynthesis; gluconeogenesis. It participates in carbohydrate degradation; glycolysis; D-glyceraldehyde 3-phosphate from glycerone phosphate: step 1/1. Involved in the gluconeogenesis. Catalyzes stereospecifically the conversion of dihydroxyacetone phosphate (DHAP) to D-glyceraldehyde-3-phosphate (G3P). This Baumannia cicadellinicola subsp. Homalodisca coagulata protein is Triosephosphate isomerase.